We begin with the raw amino-acid sequence, 103 residues long: MVNVKVEFLGGLDAIFKKQRVHKLTLKKNNSDDEPVTVGDLIDYIVENMIEDKNDVEVFLQNGTVRAGILTLINDTDWELEGEKEYELEDGDIISFTSTLHGG.

G103 carries the post-translational modification 1-thioglycine. G103 is covalently cross-linked (Glycyl lysine isopeptide (Gly-Lys) (interchain with K-? in acceptor proteins)).

It belongs to the URM1 family. In terms of processing, C-terminal thiocarboxylation occurs in 2 steps, it is first acyl-adenylated (-COAMP) via the hesA/moeB/thiF part of UBA4, then thiocarboxylated (-COSH) via the rhodanese domain of UBA4.

It localises to the cytoplasm. It functions in the pathway tRNA modification; 5-methoxycarbonylmethyl-2-thiouridine-tRNA biosynthesis. In terms of biological role, acts as a sulfur carrier required for 2-thiolation of mcm(5)S(2)U at tRNA wobble positions of cytosolic tRNA(Lys), tRNA(Glu) and tRNA(Gln). Serves as sulfur donor in tRNA 2-thiolation reaction by being thiocarboxylated (-COSH) at its C-terminus by the MOCS3 homolog UBA4. The sulfur is then transferred to tRNA to form 2-thiolation of mcm(5)S(2)U. Prior mcm(5) tRNA modification by the elongator complex is required for 2-thiolation. Also acts as a ubiquitin-like protein (UBL) that is covalently conjugated via an isopeptide bond to lysine residues of target proteins such as AHP1. The thiocarboxylated form serves as substrate for conjugation and oxidative stress specifically induces the formation of UBL-protein conjugates. In Vanderwaltozyma polyspora (strain ATCC 22028 / DSM 70294 / BCRC 21397 / CBS 2163 / NBRC 10782 / NRRL Y-8283 / UCD 57-17) (Kluyveromyces polysporus), this protein is Ubiquitin-related modifier 1.